The primary structure comprises 404 residues: Phosphopentomutase (404 aa).

Aspartate 10, aspartate 297, histidine 302, aspartate 338, histidine 339, and histidine 350 together coordinate Mn(2+).

Belongs to the phosphopentomutase family. Mn(2+) serves as cofactor.

The protein localises to the cytoplasm. It catalyses the reaction 2-deoxy-alpha-D-ribose 1-phosphate = 2-deoxy-D-ribose 5-phosphate. The enzyme catalyses alpha-D-ribose 1-phosphate = D-ribose 5-phosphate. Its pathway is carbohydrate degradation; 2-deoxy-D-ribose 1-phosphate degradation; D-glyceraldehyde 3-phosphate and acetaldehyde from 2-deoxy-alpha-D-ribose 1-phosphate: step 1/2. In terms of biological role, isomerase that catalyzes the conversion of deoxy-ribose 1-phosphate (dRib-1-P) and ribose 1-phosphate (Rib-1-P) to deoxy-ribose 5-phosphate (dRib-5-P) and ribose 5-phosphate (Rib-5-P), respectively. This Colwellia psychrerythraea (strain 34H / ATCC BAA-681) (Vibrio psychroerythus) protein is Phosphopentomutase.